A 325-amino-acid polypeptide reads, in one-letter code: Phospho-N-acetylmuramoyl-pentapeptide-transferase (325 aa).

Transmembrane regions (helical) follow at residues 5 to 25, 57 to 77, 81 to 101, 117 to 137, 146 to 166, 178 to 198, 200 to 220, 227 to 247, 252 to 272, and 304 to 324; these read VLLLTLILSFVITVILSPIFI, LMILLSILVSSLFVSFQLSIF, VLLLLLVTIGFGVLGFIDDFI, LIGQLVVAVLFYLGLRNMGLS, SLSIDFGWFYLPLVIVMLVGA, GLVAGTGAIAFGAFAIIAWAT, YFEVAIFSAAVVGAVLGFLVF, VFMGDTGSLALGGAIAAIAIM, ILLIIIGGVFVIETLSVIIQV, and VTFWTVGLLFAMLAIYLEVWI.

The protein belongs to the glycosyltransferase 4 family. MraY subfamily. The cofactor is Mg(2+).

It localises to the cell membrane. The catalysed reaction is UDP-N-acetyl-alpha-D-muramoyl-L-alanyl-gamma-D-glutamyl-meso-2,6-diaminopimeloyl-D-alanyl-D-alanine + di-trans,octa-cis-undecaprenyl phosphate = di-trans,octa-cis-undecaprenyl diphospho-N-acetyl-alpha-D-muramoyl-L-alanyl-D-glutamyl-meso-2,6-diaminopimeloyl-D-alanyl-D-alanine + UMP. It functions in the pathway cell wall biogenesis; peptidoglycan biosynthesis. Catalyzes the initial step of the lipid cycle reactions in the biosynthesis of the cell wall peptidoglycan: transfers peptidoglycan precursor phospho-MurNAc-pentapeptide from UDP-MurNAc-pentapeptide onto the lipid carrier undecaprenyl phosphate, yielding undecaprenyl-pyrophosphoryl-MurNAc-pentapeptide, known as lipid I. The polypeptide is Phospho-N-acetylmuramoyl-pentapeptide-transferase (Halalkalibacterium halodurans (strain ATCC BAA-125 / DSM 18197 / FERM 7344 / JCM 9153 / C-125) (Bacillus halodurans)).